We begin with the raw amino-acid sequence, 102 residues long: Antimicrobial peptide 1 (102 aa).

An N-terminal signal peptide occupies residues 1-26 (MASTKLFFSVITVMMLIAMASEMVNG). Intrachain disulfides connect Cys-37–Cys-90, Cys-47–Cys-102, and Cys-49–Cys-75.

The protein resides in the secreted. Functionally, antimicrobial peptide which inhibits the growth of a variety of fungi, oomycetes, Gram-positive bacterial phytopatogenes and S.cerevisiae in vitro. No activity against E.coli. The polypeptide is Antimicrobial peptide 1 (Macadamia integrifolia (Macadamia nut)).